The sequence spans 468 residues: UDP-N-acetylmuramate--L-alanine ligase (468 aa).

Residue 118 to 124 (GTHGKTT) coordinates ATP.

The protein belongs to the MurCDEF family.

It localises to the cytoplasm. It carries out the reaction UDP-N-acetyl-alpha-D-muramate + L-alanine + ATP = UDP-N-acetyl-alpha-D-muramoyl-L-alanine + ADP + phosphate + H(+). It functions in the pathway cell wall biogenesis; peptidoglycan biosynthesis. Functionally, cell wall formation. This Roseobacter denitrificans (strain ATCC 33942 / OCh 114) (Erythrobacter sp. (strain OCh 114)) protein is UDP-N-acetylmuramate--L-alanine ligase.